Consider the following 163-residue polypeptide: Choriogonadotropin subunit beta variant 2 (163 aa).

Residues 1 to 18 (MSKGLLLLLLLSMGGTWA) form the signal peptide. 6 disulfides stabilise this stretch: C27-C75, C41-C90, C44-C128, C52-C106, C56-C108, and C111-C118. N-linked (GlcNAc...) asparagine glycosylation is found at N31 and N48. Residues 129–163 (DDPRFQASSSSKAPPPSLPSPSRLPGPSDTPILPQ) form a disordered region. Residues 141–152 (APPPSLPSPSRL) are compositionally biased toward pro residues.

The protein belongs to the glycoprotein hormones subunit beta family. In terms of tissue distribution, expressed in placenta, testis and pituitary.

It is found in the secreted. This chain is Choriogonadotropin subunit beta variant 2 (CGB2), found in Homo sapiens (Human).